We begin with the raw amino-acid sequence, 237 residues long: Ribosomal RNA small subunit methyltransferase G (237 aa).

Residues glycine 76, phenylalanine 81, 128-129 (VE), and arginine 147 each bind S-adenosyl-L-methionine.

The protein belongs to the methyltransferase superfamily. RNA methyltransferase RsmG family.

The protein resides in the cytoplasm. Its function is as follows. Specifically methylates the N7 position of a guanine in 16S rRNA. This chain is Ribosomal RNA small subunit methyltransferase G, found in Prochlorococcus marinus (strain AS9601).